The sequence spans 198 residues: MSAIFKIIHETSSKFMDSILREGKLLTSNNLNKKFLTDSPKGQGSKDRKLCDSEESIKNKEHFWKHCDEADGVYFRILEMDTPLKTYAGDIILVFSKDMLYKYSWILNTTENFGFYISSPGFEGESQFSGEIGTTYTLDTLKDMDVSSFDPYSSELCVFNNVSLKFLKEIYVREPAFEDLQLSVRALNKYSNAPVIIF.

This is an uncharacterized protein from Acheta domesticus (House cricket).